The chain runs to 432 residues: MEGQPRGSRGPLEKPLPAATHPTLSSLGAVFILLKSALGAGLLNFPWAFYKAGGMLPTFLVALVSLVFLISGLVILGYAASVSGQTTYQGVVRELCGPAMGKLCEICFLTNLLMISVAFLRVIGDQLEKLCDSLLPDAPQPWYAAQNFTLPLISMLVIFPLSALREIALQKYTSILGTLAACYLALVITVQYYLWPQGLIRQPGPLLSPSPWTSVFSVFPTICFGFQCHEAAVSIYCSMWNQSLSHWTLVSVLSLLACCLVYTLTGVYGFLTFGPEVSADILMSYPGNDTAIIVARVLFAVSIVTVYPIVLFLGRSVMQDFWKKSYWATRGPPVLADPSGPWVRLPLTFLWVVVTLTMALFLPDLSEIISIIGGVSSFFIFIFPGLCLICAVDTEPMGPRVKCCLEAWGILSVLVGTFIFGQSTAVAMVELL.

Helical transmembrane passes span 29 to 49, 59 to 79, 103 to 123, 144 to 164, 175 to 195, 215 to 237, 253 to 273, 292 to 312, 345 to 365, 368 to 388, and 409 to 429; these read AVFI…PWAF, FLVA…LGYA, LCEI…LRVI, AAQN…LSAL, ILGT…YYLW, VFSV…SIYC, LSLL…FLTF, IIVA…IVLF, LPLT…LPDL, IISI…GLCL, and GILS…VAMV.

Belongs to the amino acid/polyamine transporter 2 family. As to expression, expressed in neurons located in the gray matter. Highly expressed in thalamus, hypothalamus, amygdala and pons. Expressed in the CA3 area of hippocampus and in the Purkinje layer of the cerebellum (at protein level). Expressed in the eye.

It localises to the membrane. It is found in the cytoplasm. The protein localises to the cell cortex. Its subcellular location is the cell projection. The protein resides in the axon. The catalysed reaction is L-glutamine(out) = L-glutamine(in). It catalyses the reaction L-alanine(in) = L-alanine(out). The enzyme catalyses L-histidine(out) = L-histidine(in). It carries out the reaction L-aspartate(out) = L-aspartate(in). The catalysed reaction is L-arginine(in) = L-arginine(out). It catalyses the reaction L-leucine(in) = L-leucine(out). Its function is as follows. Electrogenic sodium-dependent amino acid transporter with a preference for L-glutamine, L-alanine, L-histidine, L-aspartate and L-arginine. May facilitate glutamine uptake in both excitatory and inhibitory neurons. The transport mechanism and stoichiometry remain to be elucidated. This is Solute carrier family 38 member 8 from Mus musculus (Mouse).